Reading from the N-terminus, the 341-residue chain is S-adenosylmethionine:tRNA ribosyltransferase-isomerase (341 aa).

This sequence belongs to the QueA family. As to quaternary structure, monomer.

Its subcellular location is the cytoplasm. The enzyme catalyses 7-aminomethyl-7-carbaguanosine(34) in tRNA + S-adenosyl-L-methionine = epoxyqueuosine(34) in tRNA + adenine + L-methionine + 2 H(+). The protein operates within tRNA modification; tRNA-queuosine biosynthesis. In terms of biological role, transfers and isomerizes the ribose moiety from AdoMet to the 7-aminomethyl group of 7-deazaguanine (preQ1-tRNA) to give epoxyqueuosine (oQ-tRNA). The polypeptide is S-adenosylmethionine:tRNA ribosyltransferase-isomerase (Desulfitobacterium hafniense (strain DSM 10664 / DCB-2)).